The primary structure comprises 236 residues: MDKETVKDIQRSIAMKLNRVEYTEVPLIEGYSEAEDCYKRFRDSLKKISDSITWLMTYEYGGSKMKSLYSKMTMITSTSRIGQFKNYDIYEANGLIGLEFSKIGVASSLSDTGKKYSKAYMDISRYKLEMNSRLEQQLKKISDLRDHSNAIDKKRKKVSNIRYDLEMEKKSKEPKTPSMVSRENDMERTFKETSKEALKEMERFIGNDGVSGVLQKVAEAHRMFTEKSAKALEEVK.

Residues 169–188 are disordered; that stretch reads KKSKEPKTPSMVSRENDMER.

It belongs to the SWP12 family.

The protein resides in the spore wall. The chain is Spore wall protein 12 (SWP12) from Encephalitozoon cuniculi (strain GB-M1) (Microsporidian parasite).